Here is a 68-residue protein sequence, read N- to C-terminus: uncharacterized protein (68 aa).

The N-terminal stretch at 1–21 (MELYREYPAWLIFLRRTYAVA) is a signal peptide.

This is an uncharacterized protein from Escherichia coli O157:H7.